We begin with the raw amino-acid sequence, 353 residues long: Histidinol-phosphate aminotransferase (353 aa).

At lysine 218 the chain carries N6-(pyridoxal phosphate)lysine.

It belongs to the class-II pyridoxal-phosphate-dependent aminotransferase family. Histidinol-phosphate aminotransferase subfamily. In terms of assembly, homodimer. It depends on pyridoxal 5'-phosphate as a cofactor.

The catalysed reaction is L-histidinol phosphate + 2-oxoglutarate = 3-(imidazol-4-yl)-2-oxopropyl phosphate + L-glutamate. It functions in the pathway amino-acid biosynthesis; L-histidine biosynthesis; L-histidine from 5-phospho-alpha-D-ribose 1-diphosphate: step 7/9. This chain is Histidinol-phosphate aminotransferase, found in Synechococcus sp. (strain JA-3-3Ab) (Cyanobacteria bacterium Yellowstone A-Prime).